Consider the following 191-residue polypeptide: Pyridoxal 5'-phosphate synthase subunit PdxT (191 aa).

46–48 serves as a coordination point for L-glutamine; that stretch reads GES. Cys-78 acts as the Nucleophile in catalysis. Residues Arg-105 and 133 to 134 contribute to the L-glutamine site; that span reads IR. Active-site charge relay system residues include His-169 and Glu-171.

Belongs to the glutaminase PdxT/SNO family. In the presence of PdxS, forms a dodecamer of heterodimers. Only shows activity in the heterodimer.

The catalysed reaction is aldehydo-D-ribose 5-phosphate + D-glyceraldehyde 3-phosphate + L-glutamine = pyridoxal 5'-phosphate + L-glutamate + phosphate + 3 H2O + H(+). The enzyme catalyses L-glutamine + H2O = L-glutamate + NH4(+). It functions in the pathway cofactor biosynthesis; pyridoxal 5'-phosphate biosynthesis. Its function is as follows. Catalyzes the hydrolysis of glutamine to glutamate and ammonia as part of the biosynthesis of pyridoxal 5'-phosphate. The resulting ammonia molecule is channeled to the active site of PdxS. This Brevibacillus brevis (strain 47 / JCM 6285 / NBRC 100599) protein is Pyridoxal 5'-phosphate synthase subunit PdxT.